Consider the following 491-residue polypeptide: Glutamyl-tRNA(Gln) amidotransferase subunit A (491 aa).

Active-site charge relay system residues include Lys78 and Ser158. The active-site Acyl-ester intermediate is the Ser182.

It belongs to the amidase family. GatA subfamily. As to quaternary structure, heterotrimer of A, B and C subunits.

It catalyses the reaction L-glutamyl-tRNA(Gln) + L-glutamine + ATP + H2O = L-glutaminyl-tRNA(Gln) + L-glutamate + ADP + phosphate + H(+). Allows the formation of correctly charged Gln-tRNA(Gln) through the transamidation of misacylated Glu-tRNA(Gln) in organisms which lack glutaminyl-tRNA synthetase. The reaction takes place in the presence of glutamine and ATP through an activated gamma-phospho-Glu-tRNA(Gln). The protein is Glutamyl-tRNA(Gln) amidotransferase subunit A of Afipia carboxidovorans (strain ATCC 49405 / DSM 1227 / KCTC 32145 / OM5) (Oligotropha carboxidovorans).